Consider the following 287-residue polypeptide: Large ribosomal subunit protein uL2 (287 aa).

2 disordered regions span residues 1 to 30 (MGIR…DQPE) and 211 to 287 (NRWK…GRQS). The span at 12-22 (GTRQKSVSDFS) shows a compositional bias: polar residues. 2 stretches are compositionally biased toward basic residues: residues 211–220 (NRWKGRRPKV) and 258–287 (KTRK…GRQS).

Belongs to the universal ribosomal protein uL2 family. Part of the 50S ribosomal subunit. Forms a bridge to the 30S subunit in the 70S ribosome.

Its function is as follows. One of the primary rRNA binding proteins. Required for association of the 30S and 50S subunits to form the 70S ribosome, for tRNA binding and peptide bond formation. It has been suggested to have peptidyltransferase activity; this is somewhat controversial. Makes several contacts with the 16S rRNA in the 70S ribosome. The chain is Large ribosomal subunit protein uL2 from Cyanothece sp. (strain PCC 7425 / ATCC 29141).